Consider the following 153-residue polypeptide: 6,7-dimethyl-8-ribityllumazine synthase (153 aa).

5-amino-6-(D-ribitylamino)uracil contacts are provided by residues phenylalanine 22, alanine 56–glutamate 58, and threonine 80–isoleucine 82. (2S)-2-hydroxy-3-oxobutyl phosphate is bound at residue serine 85 to threonine 86. Residue histidine 88 is the Proton donor of the active site. Position 113 (phenylalanine 113) interacts with 5-amino-6-(D-ribitylamino)uracil. Arginine 127 lines the (2S)-2-hydroxy-3-oxobutyl phosphate pocket.

Belongs to the DMRL synthase family. As to quaternary structure, forms an icosahedral capsid composed of 60 subunits, arranged as a dodecamer of pentamers.

The enzyme catalyses (2S)-2-hydroxy-3-oxobutyl phosphate + 5-amino-6-(D-ribitylamino)uracil = 6,7-dimethyl-8-(1-D-ribityl)lumazine + phosphate + 2 H2O + H(+). It participates in cofactor biosynthesis; riboflavin biosynthesis; riboflavin from 2-hydroxy-3-oxobutyl phosphate and 5-amino-6-(D-ribitylamino)uracil: step 1/2. In terms of biological role, catalyzes the formation of 6,7-dimethyl-8-ribityllumazine by condensation of 5-amino-6-(D-ribitylamino)uracil with 3,4-dihydroxy-2-butanone 4-phosphate. This is the penultimate step in the biosynthesis of riboflavin. The protein is 6,7-dimethyl-8-ribityllumazine synthase of Haemophilus ducreyi (strain 35000HP / ATCC 700724).